A 168-amino-acid chain; its full sequence is Sec-independent protein translocase protein TatB (168 aa).

The chain crosses the membrane as a helical span at residues 1–21 (MIDLGISKLALIGAVALIVIG). Disordered regions lie at residues 92–132 (FDGS…QGAR) and 146–168 (VQSG…SFFE). Over residues 94–107 (GSASSSSSSDTGSG) the composition is skewed to low complexity. Over residues 117–126 (KSHNGRKSWR) the composition is skewed to basic residues.

The protein belongs to the TatB family. As to quaternary structure, the Tat system comprises two distinct complexes: a TatABC complex, containing multiple copies of TatA, TatB and TatC subunits, and a separate TatA complex, containing only TatA subunits. Substrates initially bind to the TatABC complex, which probably triggers association of the separate TatA complex to form the active translocon.

The protein localises to the cell inner membrane. Part of the twin-arginine translocation (Tat) system that transports large folded proteins containing a characteristic twin-arginine motif in their signal peptide across membranes. Together with TatC, TatB is part of a receptor directly interacting with Tat signal peptides. TatB may form an oligomeric binding site that transiently accommodates folded Tat precursor proteins before their translocation. This chain is Sec-independent protein translocase protein TatB, found in Cupriavidus metallidurans (strain ATCC 43123 / DSM 2839 / NBRC 102507 / CH34) (Ralstonia metallidurans).